The primary structure comprises 299 residues: Apolipoprotein E (299 aa).

An N-terminal signal peptide occupies residues 1-18 (MKALWAVLVVTLLAGCRA). 8 tandem repeats follow at residues 74 to 95 (VLME…EELG), 96 to 117 (PVAE…ARLR), 118 to 139 (ADME…VMLG), 140 to 161 (QSPD…KRLL), 162 to 183 (RDAE…EGAE), 184 to 205 (RGVS…VRAA), 206 to 223 (LTGQ…ERLR), and 224 to 245 (GRLE…EQME). An 8 X 22 AA approximate tandem repeats region spans residues 74-245 (VLMEDTMKEV…RLDEVREQME (172 aa)). The tract at residues 152 to 162 (HLRKLRKRLLR) is LDL and other lipoprotein receptors binding. 156–159 (LRKR) contributes to the heparin binding site. A lipid-binding and lipoprotein association region spans residues 204–273 (AALTGQPLRE…GWFEPMMEDM (70 aa)). 219–226 (GERLRGRL) provides a ligand contact to heparin. Positions 261-273 (RLKGWFEPMMEDM) are specificity for association with VLDL.

Belongs to the apolipoprotein A1/A4/E family. In terms of assembly, homotetramer. May interact with ABCA1; functionally associated with ABCA1 in the biogenesis of HDLs. May interact with APP/A4 amyloid-beta peptide; the interaction is extremely stable in vitro but its physiological significance is unclear. May interact with MAPT. May interact with MAP2. In the cerebrospinal fluid, interacts with secreted SORL1. Interacts with PMEL; this allows the loading of PMEL luminal fragment on ILVs to induce fibril nucleation. APOE exists as multiple glycosylated and sialylated glycoforms within cells and in plasma. The extent of glycosylation and sialylation are tissue and context specific. Post-translationally, glycated in plasma VLDL. In terms of processing, phosphorylated by FAM20C in the extracellular medium.

The protein resides in the secreted. It localises to the extracellular space. The protein localises to the extracellular matrix. It is found in the extracellular vesicle. Its subcellular location is the endosome. The protein resides in the multivesicular body. In terms of biological role, APOE is an apolipoprotein, a protein associating with lipid particles, that mainly functions in lipoprotein-mediated lipid transport between organs via the plasma and interstitial fluids. APOE is a core component of plasma lipoproteins and is involved in their production, conversion and clearance. Apolipoproteins are amphipathic molecules that interact both with lipids of the lipoprotein particle core and the aqueous environment of the plasma. As such, APOE associates with chylomicrons, chylomicron remnants, very low density lipoproteins (VLDL) and intermediate density lipoproteins (IDL) but shows a preferential binding to high-density lipoproteins (HDL). It also binds a wide range of cellular receptors including the LDL receptor/LDLR and the very low-density lipoprotein receptor/VLDLR that mediate the cellular uptake of the APOE-containing lipoprotein particles. Finally, APOE also has a heparin-binding activity and binds heparan-sulfate proteoglycans on the surface of cells, a property that supports the capture and the receptor-mediated uptake of APOE-containing lipoproteins by cells. The chain is Apolipoprotein E (APOE) from Heterocephalus glaber (Naked mole rat).